The sequence spans 429 residues: Histidinol dehydrogenase (429 aa).

3 residues coordinate NAD(+): Tyr127, Gln188, and Asn211. Ser234, Gln256, and His259 together coordinate substrate. Residues Gln256 and His259 each contribute to the Zn(2+) site. Residues Glu324 and His325 each act as proton acceptor in the active site. His325, Asp358, Glu412, and His417 together coordinate substrate. Asp358 serves as a coordination point for Zn(2+). His417 contacts Zn(2+).

Belongs to the histidinol dehydrogenase family. Requires Zn(2+) as cofactor.

It carries out the reaction L-histidinol + 2 NAD(+) + H2O = L-histidine + 2 NADH + 3 H(+). It functions in the pathway amino-acid biosynthesis; L-histidine biosynthesis; L-histidine from 5-phospho-alpha-D-ribose 1-diphosphate: step 9/9. Catalyzes the sequential NAD-dependent oxidations of L-histidinol to L-histidinaldehyde and then to L-histidine. This Bacillus cereus (strain ATCC 14579 / DSM 31 / CCUG 7414 / JCM 2152 / NBRC 15305 / NCIMB 9373 / NCTC 2599 / NRRL B-3711) protein is Histidinol dehydrogenase.